The following is a 186-amino-acid chain: Dihydrofolate reductase (186 aa).

One can recognise a DHFR domain in the interval K3–K183. NADP(+)-binding positions include A9 and G15–D21. E29–S34 serves as a coordination point for substrate. R53–T55 is a binding site for NADP(+). Residue R69 coordinates substrate. NADP(+)-binding positions include T75–D77 and G116–E123.

It belongs to the dihydrofolate reductase family.

It carries out the reaction (6S)-5,6,7,8-tetrahydrofolate + NADP(+) = 7,8-dihydrofolate + NADPH + H(+). It participates in cofactor biosynthesis; tetrahydrofolate biosynthesis; 5,6,7,8-tetrahydrofolate from 7,8-dihydrofolate: step 1/1. Functionally, key enzyme in folate metabolism. Catalyzes an essential reaction for de novo glycine and purine synthesis, and for DNA precursor synthesis. In Aedes albopictus (Asian tiger mosquito), this protein is Dihydrofolate reductase (DHFR).